A 62-amino-acid chain; its full sequence is Sec-independent protein translocase protein TatA (62 aa).

A helical membrane pass occupies residues 1–21; that stretch reads MFGIGIPELLVIFVLILLVFG.

Belongs to the TatA/E family. In terms of assembly, the Tat system comprises two distinct complexes: a TatABC complex, containing multiple copies of TatA, TatB and TatC subunits, and a separate TatA complex, containing only TatA subunits. Substrates initially bind to the TatABC complex, which probably triggers association of the separate TatA complex to form the active translocon.

The protein localises to the cell inner membrane. In terms of biological role, part of the twin-arginine translocation (Tat) system that transports large folded proteins containing a characteristic twin-arginine motif in their signal peptide across membranes. TatA could form the protein-conducting channel of the Tat system. The polypeptide is Sec-independent protein translocase protein TatA (Oleidesulfovibrio alaskensis (strain ATCC BAA-1058 / DSM 17464 / G20) (Desulfovibrio alaskensis)).